A 464-amino-acid polypeptide reads, in one-letter code: MDLPDESQWDETTCGFAVCQHPQCWATVRRIERGRPRILGSTCKTPLDAEDKLPVLTVVNISDSCFAPRHLPECTVTKARSLLSRSSKFYSKFHGRPPKGLPDKSLINCTNRLPKLPVLNLNETQLPCPEDVRNMVVLWIPEETEIHGRQHGKKKRKNLTVKSKSFLGLSGNQSAVTRVETPGMTVPPPTPVQLSKQFSSDFLPLWAQSEALPQDLLKELLPDRKQTMPCLEMKIKLAMMKKNLPLERNRPDSAISSKMFLSIHRLTLERPALRYPERLKKLHNLKTEGYRKQQQWQQQQQQRKVKTPIKKQEAKKKAKSDPGSQSTSHKHPVTTVHDPLYGYRTLPGQNGDMKQQQQMEKGTTSKQDSTERPKMDYCDHVDFHHNVKGPELYETEPTNKDISAPVEAVLKAQAARQKKISFNFSEIMVRTGWNSELKLLRILQETDDEDEENQYSEAEKPLEE.

Disordered stretches follow at residues 290–374 (YRKQ…ERPK) and 445–464 (ETDD…PLEE). Residues 293–302 (QQQWQQQQQQ) show a composition bias toward low complexity. Positions 303 to 318 (RKVKTPIKKQEAKKKA) are enriched in basic residues. Polar residues predominate over residues 352–367 (DMKQQQQMEKGTTSKQ). The span at 445-454 (ETDDEDEENQ) shows a compositional bias: acidic residues.

This is an uncharacterized protein from Macaca fascicularis (Crab-eating macaque).